The sequence spans 238 residues: Demethylmenaquinone methyltransferase (238 aa).

S-adenosyl-L-methionine contacts are provided by residues Thr-60, Asp-81, and 108 to 109 (NA).

This sequence belongs to the class I-like SAM-binding methyltransferase superfamily. MenG/UbiE family.

The enzyme catalyses a 2-demethylmenaquinol + S-adenosyl-L-methionine = a menaquinol + S-adenosyl-L-homocysteine + H(+). The protein operates within quinol/quinone metabolism; menaquinone biosynthesis; menaquinol from 1,4-dihydroxy-2-naphthoate: step 2/2. Functionally, methyltransferase required for the conversion of demethylmenaquinol (DMKH2) to menaquinol (MKH2). The protein is Demethylmenaquinone methyltransferase of Oceanobacillus iheyensis (strain DSM 14371 / CIP 107618 / JCM 11309 / KCTC 3954 / HTE831).